Reading from the N-terminus, the 464-residue chain is Ribosomal protein uS12 methylthiotransferase RimO (464 aa).

The region spanning 14-125 is the MTTase N-terminal domain; it reads PTVAFAHLGC…IVEVLQRVEA (112 aa). C23, C59, C88, C163, C167, and C170 together coordinate [4Fe-4S] cluster. A Radical SAM core domain is found at 149 to 378; it reads TTDQAVAFLK…MALQQPISAE (230 aa). The region spanning 381–452 is the TRAM domain; it reads HSWVSRTVDV…VYDLSGRIVG (72 aa).

This sequence belongs to the methylthiotransferase family. RimO subfamily. Requires [4Fe-4S] cluster as cofactor.

Its subcellular location is the cytoplasm. It catalyses the reaction L-aspartate(89)-[ribosomal protein uS12]-hydrogen + (sulfur carrier)-SH + AH2 + 2 S-adenosyl-L-methionine = 3-methylsulfanyl-L-aspartate(89)-[ribosomal protein uS12]-hydrogen + (sulfur carrier)-H + 5'-deoxyadenosine + L-methionine + A + S-adenosyl-L-homocysteine + 2 H(+). Catalyzes the methylthiolation of an aspartic acid residue of ribosomal protein uS12. The polypeptide is Ribosomal protein uS12 methylthiotransferase RimO (Parasynechococcus marenigrum (strain WH8102)).